The following is a 660-amino-acid chain: Bifunctional polymyxin resistance protein ArnA (660 aa).

The segment at 1-304 (MKAIVFAYHD…EMGIVTDVRV (304 aa)) is formyltransferase ArnAFT. His104 (proton donor; for formyltransferase activity) is an active-site residue. (6R)-10-formyltetrahydrofolate contacts are provided by residues Arg114 and 136 to 140 (TAKAD). The dehydrogenase ArnADH stretch occupies residues 314–660 (RRQRVLILGV…RGAVEELGNK (347 aa)). NAD(+)-binding positions include Asp347 and 368 to 369 (DV). UDP-alpha-D-glucuronate is bound by residues Ala393, Tyr398, and 432–433 (TS). The active-site Proton acceptor; for decarboxylase activity is the Glu434. UDP-alpha-D-glucuronate contacts are provided by residues Arg460, Asn492, 526 to 535 (KLVDGGEQKR), and Tyr613. The active-site Proton donor; for decarboxylase activity is Arg619.

The protein in the N-terminal section; belongs to the Fmt family. UDP-L-Ara4N formyltransferase subfamily. This sequence in the C-terminal section; belongs to the NAD(P)-dependent epimerase/dehydratase family. UDP-glucuronic acid decarboxylase subfamily. In terms of assembly, homohexamer, formed by a dimer of trimers.

The catalysed reaction is UDP-alpha-D-glucuronate + NAD(+) = UDP-beta-L-threo-pentopyranos-4-ulose + CO2 + NADH. It catalyses the reaction UDP-4-amino-4-deoxy-beta-L-arabinose + (6R)-10-formyltetrahydrofolate = UDP-4-deoxy-4-formamido-beta-L-arabinose + (6S)-5,6,7,8-tetrahydrofolate + H(+). It functions in the pathway nucleotide-sugar biosynthesis; UDP-4-deoxy-4-formamido-beta-L-arabinose biosynthesis; UDP-4-deoxy-4-formamido-beta-L-arabinose from UDP-alpha-D-glucuronate: step 1/3. The protein operates within nucleotide-sugar biosynthesis; UDP-4-deoxy-4-formamido-beta-L-arabinose biosynthesis; UDP-4-deoxy-4-formamido-beta-L-arabinose from UDP-alpha-D-glucuronate: step 3/3. Its pathway is bacterial outer membrane biogenesis; lipopolysaccharide biosynthesis. In terms of biological role, bifunctional enzyme that catalyzes the oxidative decarboxylation of UDP-glucuronic acid (UDP-GlcUA) to UDP-4-keto-arabinose (UDP-Ara4O) and the addition of a formyl group to UDP-4-amino-4-deoxy-L-arabinose (UDP-L-Ara4N) to form UDP-L-4-formamido-arabinose (UDP-L-Ara4FN). The modified arabinose is attached to lipid A and is required for resistance to polymyxin and cationic antimicrobial peptides. This Proteus mirabilis (strain HI4320) protein is Bifunctional polymyxin resistance protein ArnA.